Consider the following 353-residue polypeptide: Fe(3+) ions import ATP-binding protein FbpC (353 aa).

Positions 9–239 constitute an ABC transporter domain; that stretch reads VTFENVTKKF…PASAFIADFM (231 aa). 41 to 48 is a binding site for ATP; that stretch reads GPSGCGKT.

It belongs to the ABC transporter superfamily. Fe(3+) ion importer (TC 3.A.1.10) family. In terms of assembly, the complex is composed of two ATP-binding proteins (FbpC), two transmembrane proteins (FbpB) and a solute-binding protein (FbpA).

It localises to the cell inner membrane. The catalysed reaction is Fe(3+)(out) + ATP + H2O = Fe(3+)(in) + ADP + phosphate + H(+). Functionally, part of the ABC transporter complex FbpABC involved in Fe(3+) ions import. Responsible for energy coupling to the transport system. This chain is Fe(3+) ions import ATP-binding protein FbpC, found in Brucella abortus (strain 2308).